The following is a 271-amino-acid chain: Putative hydro-lyase OCAR_7359/OCA5_c07590 (271 aa).

The protein belongs to the D-glutamate cyclase family.

The chain is Putative hydro-lyase OCAR_7359/OCA5_c07590 from Afipia carboxidovorans (strain ATCC 49405 / DSM 1227 / KCTC 32145 / OM5) (Oligotropha carboxidovorans).